The chain runs to 642 residues: Arginine--tRNA ligase (642 aa).

Positions 133 to 143 (VNPTKPLHMGH) match the 'HIGH' region motif.

It belongs to the class-I aminoacyl-tRNA synthetase family.

Its subcellular location is the cytoplasm. The catalysed reaction is tRNA(Arg) + L-arginine + ATP = L-arginyl-tRNA(Arg) + AMP + diphosphate. In Thermococcus kodakarensis (strain ATCC BAA-918 / JCM 12380 / KOD1) (Pyrococcus kodakaraensis (strain KOD1)), this protein is Arginine--tRNA ligase.